Consider the following 181-residue polypeptide: NAD(P)H-quinone oxidoreductase subunit I, chloroplastic (181 aa).

2 consecutive 4Fe-4S ferredoxin-type domains span residues 55–84 (GRIHFEFDKCIACEVCVRVCPINLPVVDWE) and 95–124 (KSYSIDFGVCIFCGNCVEYCPTNCLSMTEE). [4Fe-4S] cluster is bound by residues Cys64, Cys67, Cys70, Cys74, Cys104, Cys107, Cys110, and Cys114.

This sequence belongs to the complex I 23 kDa subunit family. As to quaternary structure, NDH is composed of at least 16 different subunits, 5 of which are encoded in the nucleus. [4Fe-4S] cluster serves as cofactor.

The protein resides in the plastid. Its subcellular location is the chloroplast thylakoid membrane. It carries out the reaction a plastoquinone + NADH + (n+1) H(+)(in) = a plastoquinol + NAD(+) + n H(+)(out). It catalyses the reaction a plastoquinone + NADPH + (n+1) H(+)(in) = a plastoquinol + NADP(+) + n H(+)(out). NDH shuttles electrons from NAD(P)H:plastoquinone, via FMN and iron-sulfur (Fe-S) centers, to quinones in the photosynthetic chain and possibly in a chloroplast respiratory chain. The immediate electron acceptor for the enzyme in this species is believed to be plastoquinone. Couples the redox reaction to proton translocation, and thus conserves the redox energy in a proton gradient. This is NAD(P)H-quinone oxidoreductase subunit I, chloroplastic from Physcomitrium patens (Spreading-leaved earth moss).